The primary structure comprises 908 residues: Adhesion G-protein coupled receptor F1 (908 aa).

An N-terminal signal peptide occupies residues 1–20 (MRIGLLWLVPLFTLTEGTDG). Residues 21 to 588 (FLQQKNDGRR…VVPVVKWITY (568 aa)) are Extracellular-facing. Residues Asn-133, Asn-167, Asn-328, Asn-353, Asn-367, Asn-388, Asn-422, Asn-453, Asn-510, Asn-519, Asn-526, and Asn-551 are each glycosylated (N-linked (GlcNAc...) asparagine). The SEA domain maps to 147–255 (ERAKVWGTFE…GSFRVFGKAP (109 aa)). One can recognise a GAIN-B domain in the interval 434–577 (PVTQIQSTRG…SMLMSPFVPS (144 aa)). Cystine bridges form between Cys-532–Cys-559 and Cys-547–Cys-561. Positions 532–577 (CVFWDFSQLQWSNAGCQLVNETLDTVLCRCSHLTSFSMLMSPFVPS) are GPS. The segment at 566–574 (SFSMLMSPF) is stachel. Residues 589–609 (IGLSISIASLILCLIIESLFW) form a helical membrane-spanning segment. Residues 610–622 (KQTKRSQTSYTRN) lie on the Cytoplasmic side of the membrane. The helical transmembrane segment at 623–643 (ICLVNIAVSLLIADVWFIIAA) threads the bilayer. The Extracellular segment spans residues 644–658 (TVDPSVSPSGVCVAA). Cys-655 and Cys-731 form a disulfide bridge. The chain crosses the membrane as a helical span at residues 659 to 679 (VFFTHFFYLAVFFWMLVLGIL). The Cytoplasmic segment spans residues 680–697 (LAYRIILVFHHMALTTMM). Residues 698–718 (AIGFCLGYGCPLLISIITLAV) form a helical membrane-spanning segment. The Extracellular portion of the chain corresponds to 719–742 (TQPSNSYKRNDVCWLNWSDKSKPL). Residue Asn-734 is glycosylated (N-linked (GlcNAc...) asparagine). Residues 743–763 (LAFVVPALTIVAVNLVVVLLV) form a helical membrane-spanning segment. Residues 764-789 (LRKLWRPAVGERLNQDDKATAIRMGK) lie on the Cytoplasmic side of the membrane. Residues 790 to 810 (SLLVLTPLLGLTWGFGIGTMA) form a helical membrane-spanning segment. The Extracellular segment spans residues 811 to 818 (NSHNLAWH). A helical membrane pass occupies residues 819–839 (VLFALLNAFQGFFIFCFGILL). Over 840-908 (DTKLRQLLSN…ITLTQFLSTE (69 aa)) the chain is Cytoplasmic.

The protein belongs to the G-protein coupled receptor 2 family. Adhesion G-protein coupled receptor (ADGR) subfamily. In terms of assembly, heterodimer of 2 chains generated by proteolytic processing; the large extracellular N-terminal fragment and the membrane-bound C-terminal fragment predominantly remain associated and non-covalently linked. Autoproteolytically processed at the GPS region of the GAIN-B domain; this cleavage modulates receptor activity. Expressed in liver, kidney and adrenal gland. In kidney strong expression in the renal pelvis and the ureter.

The protein localises to the cell membrane. Its activity is regulated as follows. Forms a heterodimer of 2 chains generated by proteolytic processing that remain associated through non-covalent interactions mediated by the GAIN-B domain. In the inactivated receptor, the Stachel sequence (also named stalk) is embedded in the GAIN-B domain, where it adopts a beta-strand conformation. On activation, the Stachel moves into the 7 transmembrane region and adopts a twisted hook-shaped configuration that forms contacts within the receptor, leading to coupling of a G-alpha protein, which activates signaling. The cleaved GAIN-B and N-terminal domains can then dissociate from the rest of the receptor. Its function is as follows. Adhesion G-protein coupled receptor (aGPCR) for N-docosahexaenoylethanolamine (synaptamide), an omega-3 fatty acid lipid highly enriched in the brain. Ligand binding causes a conformation change that triggers signaling via guanine nucleotide-binding proteins (G proteins) and modulates the activity of downstream effectors, such as adenylate cyclase. ADGRF1 is coupled to G(s) G proteins and mediates activation of adenylate cyclase activity. Also able to couple to G(q), G(i) and G(12)/G(13) G proteins; additional evidence is however required to confirm this result in vivo. Involved in the development of neurons and cognitive function. In liver, involved in fat accumulation. The sequence is that of Adhesion G-protein coupled receptor F1 from Mus musculus (Mouse).